Here is a 254-residue protein sequence, read N- to C-terminus: Hydroxyacylglutathione hydrolase (254 aa).

Zn(2+)-binding residues include histidine 54, histidine 56, aspartate 58, histidine 59, histidine 111, aspartate 130, and histidine 168.

It belongs to the metallo-beta-lactamase superfamily. Glyoxalase II family. As to quaternary structure, monomer. The cofactor is Zn(2+).

The enzyme catalyses an S-(2-hydroxyacyl)glutathione + H2O = a 2-hydroxy carboxylate + glutathione + H(+). It functions in the pathway secondary metabolite metabolism; methylglyoxal degradation; (R)-lactate from methylglyoxal: step 2/2. In terms of biological role, thiolesterase that catalyzes the hydrolysis of S-D-lactoyl-glutathione to form glutathione and D-lactic acid. The chain is Hydroxyacylglutathione hydrolase from Legionella pneumophila (strain Corby).